We begin with the raw amino-acid sequence, 224 residues long: Myogenin (224 aa).

Phosphoserine; by CaMK2G occurs at positions 77 and 79. One can recognise a bHLH domain in the interval 81–132; sequence DRRRAATLREKRRLKKVNEAFEALKRSTLLNPNQRLPKVEILRSAIQYIERL. Threonine 87 carries the post-translational modification Phosphothreonine; by CaMK2G.

As to quaternary structure, homodimer and heterodimer with E12; heterodimerization enhances MYOG DNA-binding and transcriptional activities. Interacts with SMARCA4/BRG1/BAF190A. Interacts (via C-terminal region) with SSRP1 and SUPT16H; the interaction is indicative of an interaction with the FACT complex. Interacts with CSRP3. Phosphorylated by CAMK2G on threonine and serine amino acids in a muscle activity-dependent manner. Phosphorylation of Thr-87 impairs both DNA-binding and trans-activation functions in contracting muscles.

It is found in the nucleus. Acts as a transcriptional activator that promotes transcription of muscle-specific target genes and plays a role in muscle differentiation, cell cycle exit and muscle atrophy. Essential for the development of functional embryonic skeletal fiber muscle differentiation. However is dispensable for postnatal skeletal muscle growth; phosphorylation by CAMK2G inhibits its transcriptional activity in respons to muscle activity. Required for the recruitment of the FACT complex to muscle-specific promoter regions, thus promoting gene expression initiation. During terminal myoblast differentiation, plays a role as a strong activator of transcription at loci with an open chromatin structure previously initiated by MYOD1. Together with MYF5 and MYOD1, co-occupies muscle-specific gene promoter core regions during myogenesis. Also cooperates with myocyte-specific enhancer factor MEF2D and BRG1-dependent recruitment of SWI/SNF chromatin-remodeling enzymes to alter chromatin structure at myogenic late gene promoters. Facilitates cell cycle exit during terminal muscle differentiation through the up-regulation of miR-20a expression, which in turn represses genes involved in cell cycle progression. Binds to the E-box containing (E1) promoter region of the miR-20a gene. Also plays a role in preventing reversal of muscle cell differentiation. Contributes to the atrophy-related gene expression in adult denervated muscles. Induces fibroblasts to differentiate into myoblasts. This chain is Myogenin (MYOG), found in Bos taurus (Bovine).